Reading from the N-terminus, the 70-residue chain is DNA-directed RNA polymerase subunit omega (70 aa).

This sequence belongs to the RNA polymerase subunit omega family. The RNAP catalytic core consists of 2 alpha, 1 beta, 1 beta' and 1 omega subunit. When a sigma factor is associated with the core the holoenzyme is formed, which can initiate transcription.

The catalysed reaction is RNA(n) + a ribonucleoside 5'-triphosphate = RNA(n+1) + diphosphate. In terms of biological role, promotes RNA polymerase assembly. Latches the N- and C-terminal regions of the beta' subunit thereby facilitating its interaction with the beta and alpha subunits. In Nitratiruptor sp. (strain SB155-2), this protein is DNA-directed RNA polymerase subunit omega.